The following is a 107-amino-acid chain: Integration host factor subunit beta (107 aa).

The tract at residues 55–107 (RRPARVGRNPKSGEKVQVPEKHVPHFKPGKELRERVDGRAGEPLKNDEPEDAQ) is disordered. Residues 65–101 (KSGEKVQVPEKHVPHFKPGKELRERVDGRAGEPLKND) are compositionally biased toward basic and acidic residues.

It belongs to the bacterial histone-like protein family. As to quaternary structure, heterodimer of an alpha and a beta chain.

This protein is one of the two subunits of integration host factor, a specific DNA-binding protein that functions in genetic recombination as well as in transcriptional and translational control. This Burkholderia pseudomallei (strain K96243) protein is Integration host factor subunit beta.